The following is a 261-amino-acid chain: 4-hydroxy-tetrahydrodipicolinate reductase (261 aa).

Residues 13-18 (GMAGRM), 91-93 (GTS), and 115-118 (APNF) contribute to the NAD(+) site. Catalysis depends on His-149, which acts as the Proton donor/acceptor. A (S)-2,3,4,5-tetrahydrodipicolinate-binding site is contributed by His-150. Residue Lys-153 is the Proton donor of the active site. 159-160 (GT) provides a ligand contact to (S)-2,3,4,5-tetrahydrodipicolinate.

The protein belongs to the DapB family.

It is found in the cytoplasm. The enzyme catalyses (S)-2,3,4,5-tetrahydrodipicolinate + NAD(+) + H2O = (2S,4S)-4-hydroxy-2,3,4,5-tetrahydrodipicolinate + NADH + H(+). It carries out the reaction (S)-2,3,4,5-tetrahydrodipicolinate + NADP(+) + H2O = (2S,4S)-4-hydroxy-2,3,4,5-tetrahydrodipicolinate + NADPH + H(+). The protein operates within amino-acid biosynthesis; L-lysine biosynthesis via DAP pathway; (S)-tetrahydrodipicolinate from L-aspartate: step 4/4. Catalyzes the conversion of 4-hydroxy-tetrahydrodipicolinate (HTPA) to tetrahydrodipicolinate. The sequence is that of 4-hydroxy-tetrahydrodipicolinate reductase from Granulibacter bethesdensis (strain ATCC BAA-1260 / CGDNIH1).